The primary structure comprises 514 residues: ATP synthase subunit alpha (514 aa).

170 to 177 (GDRQTGKT) serves as a coordination point for ATP.

It belongs to the ATPase alpha/beta chains family. As to quaternary structure, F-type ATPases have 2 components, CF(1) - the catalytic core - and CF(0) - the membrane proton channel. CF(1) has five subunits: alpha(3), beta(3), gamma(1), delta(1), epsilon(1). CF(0) has three main subunits: a(1), b(2) and c(9-12). The alpha and beta chains form an alternating ring which encloses part of the gamma chain. CF(1) is attached to CF(0) by a central stalk formed by the gamma and epsilon chains, while a peripheral stalk is formed by the delta and b chains.

It localises to the cell inner membrane. It catalyses the reaction ATP + H2O + 4 H(+)(in) = ADP + phosphate + 5 H(+)(out). Its function is as follows. Produces ATP from ADP in the presence of a proton gradient across the membrane. The alpha chain is a regulatory subunit. The sequence is that of ATP synthase subunit alpha from Acinetobacter baumannii (strain AB307-0294).